We begin with the raw amino-acid sequence, 72 residues long: Neuropeptide IMFamide (72 aa).

An N-terminal signal peptide occupies residues 1–24; the sequence is MMRFTIGVVCLVAVLLSLAEVSEA. The residue at position 36 (phenylalanine 36) is a Phenylalanine amide. Residues 40-72 constitute a propeptide that is removed on maturation; it reads GPTEYDQRGKTFTALCEIATEACQAWFPSTENK.

Expressed in corpora cardiaca (CC), corpora allata (CA), antennal lobe (AL) and gnathal ganglion (GNG) (at protein level). Expression detected in only a few animals (at protein level).

It localises to the secreted. This Agrotis ipsilon (Black cutworm moth) protein is Neuropeptide IMFamide.